We begin with the raw amino-acid sequence, 302 residues long: 4-hydroxy-tetrahydrodipicolinate synthase (302 aa).

Threonine 55 provides a ligand contact to pyruvate. Tyrosine 144 serves as the catalytic Proton donor/acceptor. The Schiff-base intermediate with substrate role is filled by lysine 172. Valine 214 provides a ligand contact to pyruvate.

It belongs to the DapA family. In terms of assembly, homotetramer; dimer of dimers.

The protein resides in the cytoplasm. It catalyses the reaction L-aspartate 4-semialdehyde + pyruvate = (2S,4S)-4-hydroxy-2,3,4,5-tetrahydrodipicolinate + H2O + H(+). It functions in the pathway amino-acid biosynthesis; L-lysine biosynthesis via DAP pathway; (S)-tetrahydrodipicolinate from L-aspartate: step 3/4. In terms of biological role, catalyzes the condensation of (S)-aspartate-beta-semialdehyde [(S)-ASA] and pyruvate to 4-hydroxy-tetrahydrodipicolinate (HTPA). The polypeptide is 4-hydroxy-tetrahydrodipicolinate synthase (Synechococcus sp. (strain WH7803)).